The sequence spans 510 residues: Pectinesterase 2 (510 aa).

An N-terminal signal peptide occupies residues Met1–Thr19. N-linked (GlcNAc...) asparagine glycosylation is found at Asn110 and Asn158. Positions 275 and 305 each coordinate substrate. The active-site Proton donor is the Asp328. Cysteines 342 and 362 form a disulfide. Asp349 (nucleophile) is an active-site residue. Residues Asn371 and Asn385 are each glycosylated (N-linked (GlcNAc...) asparagine). Substrate-binding residues include Arg416 and Trp418.

In the N-terminal section; belongs to the PMEI family. The protein in the C-terminal section; belongs to the pectinesterase family. In terms of tissue distribution, expressed at low levels in young leaves, young bark, young fruit, mature fruit vesicles, shoots and flower buds, young bark and juice vesicles. In both leaf and fruit abscission zones, and mature leaves, expression was initially undetectable but increased markedly following ethylene treatment.

It localises to the secreted. The protein resides in the cell wall. It catalyses the reaction [(1-&gt;4)-alpha-D-galacturonosyl methyl ester](n) + n H2O = [(1-&gt;4)-alpha-D-galacturonosyl](n) + n methanol + n H(+). Its pathway is glycan metabolism; pectin degradation; 2-dehydro-3-deoxy-D-gluconate from pectin: step 1/5. Acts in the modification of cell walls via demethylesterification of cell wall pectin. The chain is Pectinesterase 2 (PECS-2.1) from Citrus sinensis (Sweet orange).